A 261-amino-acid polypeptide reads, in one-letter code: Glandular kallikrein-7, submandibular/renal (261 aa).

A signal peptide spans 1-18; sequence MWFLILFLDLSLGQIDAA. Positions 19-24 are cleaved as a propeptide — activation peptide; the sequence is PPGQSR. One can recognise a Peptidase S1 domain in the interval 25–258; that stretch reads VIGGYKCEKN…FTSWIKEVMK (234 aa). 5 disulfide bridges follow: cysteine 31-cysteine 173, cysteine 50-cysteine 66, cysteine 152-cysteine 219, cysteine 184-cysteine 198, and cysteine 209-cysteine 234. The Charge relay system role is filled by histidine 65. Asparagine 108 carries N-linked (GlcNAc...) asparagine glycosylation. The Charge relay system role is filled by aspartate 120. Serine 213 (charge relay system) is an active-site residue.

The protein belongs to the peptidase S1 family. Kallikrein subfamily. As to expression, kidney and submandibular gland. Not expressed in liver, pancreas, spleen, parotid, testis, cortex, prostate, ovary and pituitary.

The catalysed reaction is Preferential cleavage of Arg-|-Xaa bonds in small molecule substrates. Highly selective action to release kallidin (lysyl-bradykinin) from kininogen involves hydrolysis of Met-|-Xaa or Leu-|-Xaa.. Its function is as follows. Glandular kallikreins cleave Met-Lys and Arg-Ser bonds in kininogen to release Lys-bradykinin. Predominant kallikrein protein in the kidney. This chain is Glandular kallikrein-7, submandibular/renal (Klk7), found in Rattus norvegicus (Rat).